Consider the following 457-residue polypeptide: tRNA-2-methylthio-N(6)-dimethylallyladenosine synthase (457 aa).

Residues 2–119 (KKVFIKTFGC…LPELIDARRR (118 aa)) form the MTTase N-terminal domain. [4Fe-4S] cluster-binding residues include Cys11, Cys48, Cys82, Cys156, Cys160, and Cys163. The region spanning 142-375 (RVEGPSAFVS…QATIDANMAR (234 aa)) is the Radical SAM core domain. A TRAM domain is found at 378 to 448 (EGMVGSVQRI…PHSLRGDVVE (71 aa)).

Belongs to the methylthiotransferase family. MiaB subfamily. As to quaternary structure, monomer. [4Fe-4S] cluster is required as a cofactor.

The protein resides in the cytoplasm. It catalyses the reaction N(6)-dimethylallyladenosine(37) in tRNA + (sulfur carrier)-SH + AH2 + 2 S-adenosyl-L-methionine = 2-methylsulfanyl-N(6)-dimethylallyladenosine(37) in tRNA + (sulfur carrier)-H + 5'-deoxyadenosine + L-methionine + A + S-adenosyl-L-homocysteine + 2 H(+). Functionally, catalyzes the methylthiolation of N6-(dimethylallyl)adenosine (i(6)A), leading to the formation of 2-methylthio-N6-(dimethylallyl)adenosine (ms(2)i(6)A) at position 37 in tRNAs that read codons beginning with uridine. The chain is tRNA-2-methylthio-N(6)-dimethylallyladenosine synthase from Ralstonia nicotianae (strain ATCC BAA-1114 / GMI1000) (Ralstonia solanacearum).